We begin with the raw amino-acid sequence, 855 residues long: Coiled-coil domain-containing protein 87 (855 aa).

2 disordered regions span residues 23-43 (LFPSKAKPPPEPPKRPSQDAT) and 278-302 (SRPSPMVPLPSHSPSSESHQFPTSP). Residues 287–296 (PSHSPSSESH) show a composition bias toward low complexity. Coiled coils occupy residues 387 to 413 (TRRLTAQHHLEKLQQMIKSLQEEEASG) and 764 to 789 (RSYLQRKLNRMESNLVSLLERIESVF).

This sequence belongs to the CCDC87 family. In terms of tissue distribution, specifically expressed in testis (at protein level). Not detected in other tissues tested (at protein level). In the testis, localizes to pachytene spermatocytes and spermatids.

In terms of biological role, plays a role in spermatogenesis, where it is important for normal sperm head morphology. Also required for the acrosome reaction and thus normal male fertility. The polypeptide is Coiled-coil domain-containing protein 87 (Ccdc87) (Mus musculus (Mouse)).